The primary structure comprises 893 residues: MSDSTQMEANAAINEIKKRTRKLDQSLQMRFCADQFFIGNHCTKLASGKSIIISQNSKNRICLRFFMAADPLVGYTGRDFGIAFNQIDHISLKDEQQENPAVLICTLNLSSYTKMCKLQTGLKDVVEKPFLYNKSLARNLTFILKPWNDDPDTFVKISYNDEHREYVHSYDYDVAKSLMFKEVQAVWEQSLKEQLQRRHQTGRVYLTSQLSEMTPREWVQFLADQKLSKIVCHNGSIQYARVEDNPHGRKHTAVATNGFDHRGTRVLNSFGKAHASLATQEKSYAKKRKLTEQSLKLIYRNDRSVWLEGSCAKNLKMPKINSEPNMGEFMGWPDMDNAMTHPTSNFENEDVMKSTKQPNDFVSFEQLQAPPPVLQRQNGAIYSTQSVAFTHISGNDGVEDLTEKISHLGEEAYNIDMANALHAFSDNWHYEIHPNTVHNASFEQLHIGDGNSSIGTIGFNPLEPYPQSSFPQSNNWQQAHGDFTFPQVSFPNTQQGSCLPSTPTAALPPTRPVVEKIPPDTQLFTFPPSGSCTTGMDPVVLLVKDIKTLDRKEFLNDSVMAFMLNYIAFMLSSELMKSVHMCNTFLFVNLTRLLPPLCFSKRRPIEPEHIKIVKDNCPRVLRWTRKFDVLAKDYIIIPINEDLHWLVIAVINPSGAIVDMSNEEASRAAPKCYIVFFDPLSGLDPSKKNHMCHCIKIYLAQLYENTKAPGMKFASKNPTIYDEERVVVTRAENTPIQDNFYDCGLYVLHFIEGLFCYPNRPVNVNDFPNFDWSKFFPEANKMCDLMRDKVYNLILQQADKPARSRLAKFERENKCGLSREGALRKARRHSAVNERRTKRHRDYYARHYSLSPPHRNVMNDDPTFMNPRGLAEMPITRLVRRLRIPEDNFPIAY.

The interval 538 to 800 (PVVLLVKDIK…YNLILQQADK (263 aa)) is protease. Residues His644, Asp678, and Cys743 contribute to the active site.

The protein belongs to the peptidase C48 family.

The protein resides in the nucleus. It localises to the cytoplasm. Its subcellular location is the cytosol. Its function is as follows. Protease that catalyzes two essential functions in the smo-1 pathway: processing of full-length smo-1 to their mature forms and deconjugation of smo-1 from targeted proteins. May deconjugate smo-1 from the cadherin protein hmr-1 and plays a role in its recruitment to and the maintenance of adherens junctions. Required for epidermal morphogenesis during embryonic development. The polypeptide is Ubiquitin-like protease 2 (Caenorhabditis elegans).